The primary structure comprises 92 residues: Small ribosomal subunit protein uS19 (92 aa).

The protein belongs to the universal ribosomal protein uS19 family.

Its function is as follows. Protein S19 forms a complex with S13 that binds strongly to the 16S ribosomal RNA. In Nitrobacter winogradskyi (strain ATCC 25391 / DSM 10237 / CIP 104748 / NCIMB 11846 / Nb-255), this protein is Small ribosomal subunit protein uS19.